Here is a 353-residue protein sequence, read N- to C-terminus: UPF0324 membrane protein PP_3661 (353 aa).

8 helical membrane passes run 20-42, 70-92, 105-127, 137-159, 166-188, 234-253, 266-288, and 326-348; these read LNGILFVALFAVAVTQLAAMPAI, ASWAAGINFSARGLLRIAVAFFG, WSGLIVSVLVVTSTLLIGLWCGM, ALLTAAGSAICGAAAVLAFESAL, SAMAVGSVVLFGTLSMFLYPLAI, MTRVMLLVPVLLVVGLWISR, IAMPWFAFGFLALVLVNSMQVLP, and ALATGAILNLWLVGGGLAITLGV.

Belongs to the UPF0324 family.

The protein resides in the cell membrane. The polypeptide is UPF0324 membrane protein PP_3661 (Pseudomonas putida (strain ATCC 47054 / DSM 6125 / CFBP 8728 / NCIMB 11950 / KT2440)).